A 188-amino-acid chain; its full sequence is Probable nicotinate-nucleotide adenylyltransferase (188 aa).

It belongs to the NadD family.

The catalysed reaction is nicotinate beta-D-ribonucleotide + ATP + H(+) = deamido-NAD(+) + diphosphate. The protein operates within cofactor biosynthesis; NAD(+) biosynthesis; deamido-NAD(+) from nicotinate D-ribonucleotide: step 1/1. Functionally, catalyzes the reversible adenylation of nicotinate mononucleotide (NaMN) to nicotinic acid adenine dinucleotide (NaAD). The sequence is that of Probable nicotinate-nucleotide adenylyltransferase from Rhizobium meliloti (strain 1021) (Ensifer meliloti).